The primary structure comprises 350 residues: UDP-3-O-acylglucosamine N-acyltransferase (350 aa).

H257 functions as the Proton acceptor in the catalytic mechanism.

This sequence belongs to the transferase hexapeptide repeat family. LpxD subfamily. As to quaternary structure, homotrimer.

The catalysed reaction is a UDP-3-O-[(3R)-3-hydroxyacyl]-alpha-D-glucosamine + a (3R)-hydroxyacyl-[ACP] = a UDP-2-N,3-O-bis[(3R)-3-hydroxyacyl]-alpha-D-glucosamine + holo-[ACP] + H(+). It functions in the pathway bacterial outer membrane biogenesis; LPS lipid A biosynthesis. Catalyzes the N-acylation of UDP-3-O-acylglucosamine using 3-hydroxyacyl-ACP as the acyl donor. Is involved in the biosynthesis of lipid A, a phosphorylated glycolipid that anchors the lipopolysaccharide to the outer membrane of the cell. The chain is UDP-3-O-acylglucosamine N-acyltransferase from Chelativorans sp. (strain BNC1).